The sequence spans 527 residues: L-amino-acid oxidase (527 aa).

An N-terminal signal peptide occupies residues 1–27 (MDLHRAPWKSSAAAAVLLLALFSGAAA). A disulfide bridge connects residues Cys-37 and Cys-200. N-linked (GlcNAc...) asparagine glycosylation is present at Asn-58. Residues 70–71 (VA), 90–91 (EA), Arg-98, 114–117 (GAMR), and Val-288 each bind FAD. Residue Arg-117 participates in substrate binding. The N-linked (GlcNAc...) asparagine glycan is linked to Asn-393. Tyr-403 contributes to the substrate binding site. FAD is bound by residues Glu-485 and 492–497 (AWMESA). 492 to 493 (AW) contacts substrate.

As to quaternary structure, homodimer. FAD is required as a cofactor. In terms of tissue distribution, expression mainly observed in plasma, spleen, kidney and gills with low levels detected in blood and no expression detected in brain, liver, heart, muscle or intestine (at protein level).

It localises to the secreted. It catalyses the reaction an L-alpha-amino acid + O2 + H2O = a 2-oxocarboxylate + H2O2 + NH4(+). Its function is as follows. Inhibits the growth of both Gram-negative and Gram-positive bacteria. Displays strong antibacterial activity towards V.cholerae and E.tarda. Causes deformation of the surface of S.aureus and the formation of pores on the surface of E.coli. Strong antiparasitic activity is seen towards C.irritans, T.brucei and I.multifiliis. Cilia of treated theronts are lost and the macronucleus swells, inducing cell membrane rupture and efflux of the cytoplasm. This Siganus canaliculatus (White-spotted spinefoot) protein is L-amino-acid oxidase.